The chain runs to 310 residues: Ribose-phosphate pyrophosphokinase (310 aa).

ATP contacts are provided by residues 34–36 (DQE) and 93–94 (RQ). The Mg(2+) site is built by His-127 and Asp-167. Lys-190 is a catalytic residue. D-ribose 5-phosphate contacts are provided by residues Arg-192, Asp-216, and 220-224 (DSGGT).

This sequence belongs to the ribose-phosphate pyrophosphokinase family. Class I subfamily. Homohexamer. Mg(2+) is required as a cofactor.

The protein localises to the cytoplasm. It carries out the reaction D-ribose 5-phosphate + ATP = 5-phospho-alpha-D-ribose 1-diphosphate + AMP + H(+). The protein operates within metabolic intermediate biosynthesis; 5-phospho-alpha-D-ribose 1-diphosphate biosynthesis; 5-phospho-alpha-D-ribose 1-diphosphate from D-ribose 5-phosphate (route I): step 1/1. In terms of biological role, involved in the biosynthesis of the central metabolite phospho-alpha-D-ribosyl-1-pyrophosphate (PRPP) via the transfer of pyrophosphoryl group from ATP to 1-hydroxyl of ribose-5-phosphate (Rib-5-P). This is Ribose-phosphate pyrophosphokinase from Brucella melitensis biotype 1 (strain ATCC 23456 / CCUG 17765 / NCTC 10094 / 16M).